Consider the following 458-residue polypeptide: MEFDTIAAISTALGEGAIAIVRVSGDDAVEKVNRIFKGKDLTEVPSHTIHYGHIVDLDTNQVIEEVMVSIMRAPRTFTRENIVEINCHGGLVSVNKVLQLILAQGVRLAEPGEFTKRAFLNGRIDLSQAEAVMDLIRAKTDRAMNVAINQMEGRLSKLIGRLRQDILETLAHVEVNIDYPEYDDVEEMTHNILIEKATHVRSEIAKILETSKQGKILREGIATAIIGRPNVGKSSLLNSLVQEKKAIVTDIAGTTRDVIEEYVNVRGVPLKLIDTAGIRETEDVVERIGVERSKEMMSQADLVLVVVNYSEALTNEDEELFRAVQGKDFIVIVNKTDLPQAIDMERVIELAAGNRVITTSLIEEQGIDELEKAIADLFFEGTIDSADVTYVSNARHIGLLTQAGKTIGDAIEAIENGVPIDMVQIDLTRTWEILGEITGDTVHESLIDQLFSQFCLGK.

3 residues coordinate (6S)-5-formyl-5,6,7,8-tetrahydrofolate: Arg-22, Glu-84, and Arg-123. In terms of domain architecture, TrmE-type G spans 220 to 379 (GIATAIIGRP…LEKAIADLFF (160 aa)). Asn-230 contacts K(+). GTP is bound by residues 230–235 (NVGKSS), 249–255 (TDIAGTT), and 274–277 (DTAG). A Mg(2+)-binding site is contributed by Ser-234. The K(+) site is built by Thr-249, Ile-251, and Thr-254. Residue Thr-255 coordinates Mg(2+). Residue Lys-458 participates in (6S)-5-formyl-5,6,7,8-tetrahydrofolate binding.

It belongs to the TRAFAC class TrmE-Era-EngA-EngB-Septin-like GTPase superfamily. TrmE GTPase family. In terms of assembly, homodimer. Heterotetramer of two MnmE and two MnmG subunits. K(+) serves as cofactor.

The protein localises to the cytoplasm. Its function is as follows. Exhibits a very high intrinsic GTPase hydrolysis rate. Involved in the addition of a carboxymethylaminomethyl (cmnm) group at the wobble position (U34) of certain tRNAs, forming tRNA-cmnm(5)s(2)U34. This chain is tRNA modification GTPase MnmE, found in Bacillus thuringiensis (strain Al Hakam).